Here is a 344-residue protein sequence, read N- to C-terminus: S-adenosylmethionine:tRNA ribosyltransferase-isomerase (344 aa).

The protein belongs to the QueA family. Monomer.

It localises to the cytoplasm. The catalysed reaction is 7-aminomethyl-7-carbaguanosine(34) in tRNA + S-adenosyl-L-methionine = epoxyqueuosine(34) in tRNA + adenine + L-methionine + 2 H(+). It participates in tRNA modification; tRNA-queuosine biosynthesis. In terms of biological role, transfers and isomerizes the ribose moiety from AdoMet to the 7-aminomethyl group of 7-deazaguanine (preQ1-tRNA) to give epoxyqueuosine (oQ-tRNA). This is S-adenosylmethionine:tRNA ribosyltransferase-isomerase from Thiobacillus denitrificans (strain ATCC 25259 / T1).